We begin with the raw amino-acid sequence, 402 residues long: NADH dehydrogenase [ubiquinone] 1 alpha subcomplex subunit 9, mitochondrial (402 aa).

A mitochondrion-targeting transit peptide spans methionine 1–tyrosine 43.

The protein belongs to the complex I NDUFA9 subunit family. In terms of assembly, complex I is composed of at least 49 different subunits. This a component of the hydrophobic protein fraction. Requires FAD as cofactor.

Its subcellular location is the mitochondrion matrix. Functionally, accessory subunit of the mitochondrial membrane respiratory chain NADH dehydrogenase (Complex I), that is believed not to be involved in catalysis. Complex I functions in the transfer of electrons from NADH to the respiratory chain. The immediate electron acceptor for the enzyme is believed to be ubiquinone. In Arabidopsis thaliana (Mouse-ear cress), this protein is NADH dehydrogenase [ubiquinone] 1 alpha subcomplex subunit 9, mitochondrial.